Reading from the N-terminus, the 207-residue chain is N-(5'-phosphoribosyl)anthranilate isomerase (207 aa).

It belongs to the TrpF family.

The catalysed reaction is N-(5-phospho-beta-D-ribosyl)anthranilate = 1-(2-carboxyphenylamino)-1-deoxy-D-ribulose 5-phosphate. Its pathway is amino-acid biosynthesis; L-tryptophan biosynthesis; L-tryptophan from chorismate: step 3/5. The polypeptide is N-(5'-phosphoribosyl)anthranilate isomerase (Legionella pneumophila subsp. pneumophila (strain Philadelphia 1 / ATCC 33152 / DSM 7513)).